Reading from the N-terminus, the 342-residue chain is MKQLESFQIPRIVIFGPGAILKTPLVVSELKAGRILVISGKSATTAYANQVAQLLSNYSVDVVRYNEVDLSKSSYDLVIGVGGGRPIDMAKVYSCVHKKPLVVIPTAASHDGIASPYVSYTLSQKLQTYGKIVASPVAIIADTSVILSAPSRLLKAGIGDLLGKIIAVRDWQLAHRLKGEEYSEYAAHLAVTSYKIAATNARRIRNFTREEDVRVLVKALIGCGVAMGIAGSSRPCSGSEHLFAHAIELRLQEESSEAVHGELVALGTIIMAYLHGINWRRIKKIAEIVGLPTTLKQAGIDADMAVEALTTAHALRPDRYTILGNGLSREAARRALEDTELI.

NAD(+) contacts are provided by residues 84-88 (GRPID) and 106-109 (TAAS). Position 111 (Asp111) interacts with substrate. Ser115 contacts NAD(+). Asp160 serves as a coordination point for substrate. Asp160 and His241 together coordinate Zn(2+). His245 contributes to the substrate binding site. His260 contacts Zn(2+).

It belongs to the glycerol-1-phosphate dehydrogenase family. As to quaternary structure, homodimer. Requires Zn(2+) as cofactor.

Its subcellular location is the cytoplasm. It carries out the reaction sn-glycerol 1-phosphate + NAD(+) = dihydroxyacetone phosphate + NADH + H(+). The catalysed reaction is sn-glycerol 1-phosphate + NADP(+) = dihydroxyacetone phosphate + NADPH + H(+). It functions in the pathway membrane lipid metabolism; glycerophospholipid metabolism. Catalyzes the NAD(P)H-dependent reduction of dihydroxyacetonephosphate (DHAP or glycerone phosphate) to glycerol 1-phosphate (G1P). The G1P thus generated is used as the glycerophosphate backbone of phospholipids in the cellular membranes of Archaea. In Pyrobaculum aerophilum (strain ATCC 51768 / DSM 7523 / JCM 9630 / CIP 104966 / NBRC 100827 / IM2), this protein is Glycerol-1-phosphate dehydrogenase [NAD(P)+].